Reading from the N-terminus, the 179-residue chain is MASIDVGETIGIEQVEPVKFRFVCHCGFCPPSFVTARGAGSVSLRVVVHYVPSPEREDPESPTRGVDEVDGACSEPPTPRPEPRFRAIEEMGKIVVLVSVCPLRPALQHRWVGAPARRHRSDSVARRARFEPWRGRASRPTVLTPASGDSDDVDTRTFGCGCGPGHPPVDCMCDRQDWL.

The interval 53–82 (SPEREDPESPTRGVDEVDGACSEPPTPRPE) is disordered. Basic and acidic residues predominate over residues 54–67 (PEREDPESPTRGVD).

This is an uncharacterized protein from Ictaluridae (bullhead catfishes).